A 256-amino-acid polypeptide reads, in one-letter code: Glutamate racemase (256 aa).

Substrate is bound by residues Asp11 to Ser12 and Tyr43 to Gly44. The Proton donor/acceptor role is filled by Cys74. Asn75 to Thr76 contacts substrate. The active-site Proton donor/acceptor is the Cys182. Thr183–His184 provides a ligand contact to substrate.

The protein belongs to the aspartate/glutamate racemases family.

The catalysed reaction is L-glutamate = D-glutamate. Its pathway is cell wall biogenesis; peptidoglycan biosynthesis. Provides the (R)-glutamate required for cell wall biosynthesis. This chain is Glutamate racemase, found in Leptospira interrogans serogroup Icterohaemorrhagiae serovar Lai (strain 56601).